The following is a 368-amino-acid chain: MSLLVFLCQIIVLSVLFFSEVCLAGKKIPANFVFGDSLVDAGNNNYLATLSKANYVPNGIDFGSPTGRFTNGRTIVDIVYQALGSDELTPPYLAPTTSGSLILNGVNYASGGSGILNSTGKLFGERINVDAQLDNFATTRQDIISWIGESEAAKLFRSAIFSVTTGSNDLINNYFTPVISTLQRKVVAPEVFVDTMISKFRLQLTRLYQLGARKIVVINIGPIGCIPFERESDPAAGNNCLAEPNEVAQMYNLKLKTLVEELNKNLQGSRFVYGDVFRIVDDIIQNYSSYGFESEKIPCCSLVGKVGGLIPCGPPSKVCMDRSKYVFWDPYHPTEAANIIIARRLLSGDTSDIYPINIRQLANLKINA.

Residues 1-24 form the signal peptide; the sequence is MSLLVFLCQIIVLSVLFFSEVCLA. Serine 37 serves as the catalytic Nucleophile. N-linked (GlcNAc...) asparagine glycosylation is found at asparagine 117 and asparagine 286. Catalysis depends on residues aspartate 329 and histidine 332.

This sequence belongs to the 'GDSL' lipolytic enzyme family.

The protein localises to the secreted. This is GDSL esterase/lipase At4g16230 from Arabidopsis thaliana (Mouse-ear cress).